Here is a 351-residue protein sequence, read N- to C-terminus: Glucan endo-1,3-beta-glucosidase (351 aa).

Positions 1 to 32 (MALWYLFNKRSLGAAVLILVGLLMCNIQITGA) are cleaved as a signal peptide. Q33 carries the pyrrolidone carboxylic acid modification. N79 and N99 each carry an N-linked (GlcNAc...) asparagine glycan. E128 acts as the Proton donor in catalysis. The N-linked (GlcNAc...) asparagine glycan is linked to N235. E268 (nucleophile) is an active-site residue.

The protein belongs to the glycosyl hydrolase 17 family. In terms of processing, glycosylated. The N-terminus is blocked.

The protein resides in the secreted. It is found in the extracellular space. Its subcellular location is the extracellular matrix. The enzyme catalyses Hydrolysis of (1-&gt;3)-beta-D-glucosidic linkages in (1-&gt;3)-beta-D-glucans.. Functionally, implicated in the defense of plants against pathogens. In Nicotiana tabacum (Common tobacco), this protein is Glucan endo-1,3-beta-glucosidase (SP41B).